The following is a 153-amino-acid chain: Interleukin-2 (153 aa).

The signal sequence occupies residues 1–20 (MYRMQLLSCIALSLALVTNS). Threonine 23 is a glycosylation site (O-linked (GalNAc...) threonine). A disulfide bridge connects residues cysteine 78 and cysteine 125.

The protein belongs to the IL-2 family.

It is found in the secreted. Its function is as follows. Cytokine produced by activated CD4-positive helper T-cells and to a lesser extend activated CD8-positive T-cells and natural killer (NK) cells that plays pivotal roles in the immune response and tolerance. Binds to a receptor complex composed of either the high-affinity trimeric IL-2R (IL2RA/CD25, IL2RB/CD122 and IL2RG/CD132) or the low-affinity dimeric IL-2R (IL2RB and IL2RG). Interaction with the receptor leads to oligomerization and conformation changes in the IL-2R subunits resulting in downstream signaling starting with phosphorylation of JAK1 and JAK3. In turn, JAK1 and JAK3 phosphorylate the receptor to form a docking site leading to the phosphorylation of several substrates including STAT5. This process leads to activation of several pathways including STAT, phosphoinositide-3-kinase/PI3K and mitogen-activated protein kinase/MAPK pathways. Functions as a T-cell growth factor and can increase NK-cell cytolytic activity as well. Promotes strong proliferation of activated B-cells and subsequently immunoglobulin production. Plays a pivotal role in regulating the adaptive immune system by controlling the survival and proliferation of regulatory T-cells, which are required for the maintenance of immune tolerance. Moreover, participates in the differentiation and homeostasis of effector T-cell subsets, including Th1, Th2, Th17 as well as memory CD8-positive T-cells. This is Interleukin-2 (IL2) from Homo sapiens (Human).